The sequence spans 227 residues: Pectinesterase inhibitor 28 (227 aa).

The N-terminal stretch at 1-25 is a signal peptide; the sequence is MASSMAPAAAMAILLLALLMPATLC. Residues 28 to 50 are disordered; it reads SGPPSSKHGHGGHAKRAPPPASP. Over residues 34-43 the composition is skewed to basic residues; that stretch reads KHGHGGHAKR. Cysteine 66 and cysteine 75 are oxidised to a cystine. N-linked (GlcNAc...) asparagine glycosylation is found at asparagine 67, asparagine 104, and asparagine 117. A disulfide bridge links cysteine 139 with cysteine 179.

The protein belongs to the PMEI family. In terms of tissue distribution, expressed in roots, leaves, culms and flag leaves.

The protein localises to the secreted. It localises to the extracellular space. Its subcellular location is the apoplast. In terms of biological role, pectin methylesterase (PME) inhibitor that inhibits PME in vitro. Functions as a critical structural modulator by regulating the degree of pectin methylesterification and the physiochemical properties of the cell wall components. The protein is Pectinesterase inhibitor 28 of Oryza sativa subsp. japonica (Rice).